The following is an 89-amino-acid chain: Large ribosomal subunit protein bL27 (89 aa).

A disordered region spans residues 1–21 (MAHKKAGGSSRNGRDSAGRRL).

This sequence belongs to the bacterial ribosomal protein bL27 family.

The sequence is that of Large ribosomal subunit protein bL27 from Novosphingobium aromaticivorans (strain ATCC 700278 / DSM 12444 / CCUG 56034 / CIP 105152 / NBRC 16084 / F199).